Here is a 417-residue protein sequence, read N- to C-terminus: Gamma-glutamyl phosphate reductase (417 aa).

It belongs to the gamma-glutamyl phosphate reductase family.

The protein localises to the cytoplasm. It catalyses the reaction L-glutamate 5-semialdehyde + phosphate + NADP(+) = L-glutamyl 5-phosphate + NADPH + H(+). It participates in amino-acid biosynthesis; L-proline biosynthesis; L-glutamate 5-semialdehyde from L-glutamate: step 2/2. In terms of biological role, catalyzes the NADPH-dependent reduction of L-glutamate 5-phosphate into L-glutamate 5-semialdehyde and phosphate. The product spontaneously undergoes cyclization to form 1-pyrroline-5-carboxylate. This Haemophilus influenzae (strain PittEE) protein is Gamma-glutamyl phosphate reductase.